A 165-amino-acid chain; its full sequence is Large ribosomal subunit protein uL10 (165 aa).

The protein belongs to the universal ribosomal protein uL10 family. Part of the ribosomal stalk of the 50S ribosomal subunit. The N-terminus interacts with L11 and the large rRNA to form the base of the stalk. The C-terminus forms an elongated spine to which L12 dimers bind in a sequential fashion forming a multimeric L10(L12)X complex.

Forms part of the ribosomal stalk, playing a central role in the interaction of the ribosome with GTP-bound translation factors. In Burkholderia lata (strain ATCC 17760 / DSM 23089 / LMG 22485 / NCIMB 9086 / R18194 / 383), this protein is Large ribosomal subunit protein uL10.